A 797-amino-acid chain; its full sequence is Hid-1 family protein P27G11.12 (797 aa).

This sequence belongs to the hid-1 family.

The protein resides in the cytoplasm. The protein localises to the nucleus. This chain is Hid-1 family protein P27G11.12, found in Schizosaccharomyces pombe (strain 972 / ATCC 24843) (Fission yeast).